The sequence spans 187 residues: MIATRDDVCRQAGLQYGWLPHAFQAPRTLRGWLSDRGSLTQRLRSRYRDFRVLPVLRGVAAPFPDESGALGLARDASAYVRDVLLLGDGKARVFAHSVLPRAALRGGWNGIARLGTRPLGEALFRTPRVRRLAMTMRRVDARHPLYCAARRHAEVAERALWARRSVFCLDGHPLLVSEVFLPALLTP.

Substrate-binding residues include Arg-81, Leu-119, and Glu-178.

It belongs to the UbiC family.

Its subcellular location is the cytoplasm. The enzyme catalyses chorismate = 4-hydroxybenzoate + pyruvate. Its pathway is cofactor biosynthesis; ubiquinone biosynthesis. Functionally, removes the pyruvyl group from chorismate, with concomitant aromatization of the ring, to provide 4-hydroxybenzoate (4HB) for the ubiquinone pathway. This is Probable chorismate pyruvate-lyase from Thiobacillus denitrificans (strain ATCC 25259 / T1).